We begin with the raw amino-acid sequence, 242 residues long: 1-(5-phosphoribosyl)-5-[(5-phosphoribosylamino)methylideneamino] imidazole-4-carboxamide isomerase (242 aa).

Asp8 acts as the Proton acceptor in catalysis. The active-site Proton donor is Asp129.

The protein belongs to the HisA/HisF family.

It localises to the cytoplasm. It catalyses the reaction 1-(5-phospho-beta-D-ribosyl)-5-[(5-phospho-beta-D-ribosylamino)methylideneamino]imidazole-4-carboxamide = 5-[(5-phospho-1-deoxy-D-ribulos-1-ylimino)methylamino]-1-(5-phospho-beta-D-ribosyl)imidazole-4-carboxamide. The protein operates within amino-acid biosynthesis; L-histidine biosynthesis; L-histidine from 5-phospho-alpha-D-ribose 1-diphosphate: step 4/9. The sequence is that of 1-(5-phosphoribosyl)-5-[(5-phosphoribosylamino)methylideneamino] imidazole-4-carboxamide isomerase from Clostridium botulinum (strain Kyoto / Type A2).